The following is a 308-amino-acid chain: MNMHDLTTVESFSEEDVLHKIRLAEEFKNGKTIELTRPVYAMNLFFENSTRTHTSFEMAESRLGMRLLEFEAKTSSVTKGESLLDTVKTIDAIQTDIAVIRHPQNDYYKQLLEADLNISIVNGGDGSGQHPSQSLLDMMTIYQEFNHFDGLKIAIAGDIAHSRVARSNAMLLNKLGAEVYFAGPEAWMAEDLKAYGTFLPIDELVEKVDVMMLLRIQNERISQDTAIKFEPHEYLQEYGLTFERADRMQPTAIIMHPAPVNRGTEIESSLVDGEKSRIFKQMTNGMYMRMAILTDVLEAKGLIKGGLH.

Residues Arg-51 and Thr-52 each coordinate carbamoyl phosphate. An L-aspartate-binding site is contributed by Lys-79. Residues Arg-101, His-130, and Gln-133 each contribute to the carbamoyl phosphate site. 2 residues coordinate L-aspartate: Arg-163 and Arg-215. 2 residues coordinate carbamoyl phosphate: Ala-258 and Pro-259.

The protein belongs to the aspartate/ornithine carbamoyltransferase superfamily. ATCase family. As to quaternary structure, heterododecamer (2C3:3R2) of six catalytic PyrB chains organized as two trimers (C3), and six regulatory PyrI chains organized as three dimers (R2).

It catalyses the reaction carbamoyl phosphate + L-aspartate = N-carbamoyl-L-aspartate + phosphate + H(+). Its pathway is pyrimidine metabolism; UMP biosynthesis via de novo pathway; (S)-dihydroorotate from bicarbonate: step 2/3. In terms of biological role, catalyzes the condensation of carbamoyl phosphate and aspartate to form carbamoyl aspartate and inorganic phosphate, the committed step in the de novo pyrimidine nucleotide biosynthesis pathway. The sequence is that of Aspartate carbamoyltransferase catalytic subunit from Pediococcus pentosaceus (strain ATCC 25745 / CCUG 21536 / LMG 10740 / 183-1w).